The chain runs to 925 residues: ETO1-like protein 2 (925 aa).

A BTB domain is found at 207 to 307 (SDISFCVGSE…ECEARLAASV (101 aa)). One copy of the TPR 1 repeat lies at 409 to 442 (ALSLHQMGCVLFERKDYKAAQFHFRLASSLGHVY). Positions 509–533 (KYRAVMKFEQKQIKEAFQEIDRLIQ) form a coiled coil. TPR repeat units lie at residues 538-571 (PECL…EPNY), 664-697 (AERL…QRSF), 738-771 (GQAL…KHIR), 773-803 (RQGL…SCSK), 834-867 (TYPY…RPEL), and 869-900 (TLHL…DPNH).

The protein belongs to the ETO1 family. In terms of assembly, interacts with the C-terminal domain of ACS5. In terms of tissue distribution, constitutively expressed in green and etiolated seedlings.

Its pathway is protein modification; protein ubiquitination. Its function is as follows. Potential regulator of the ethylene pathway, which acts by regulating the stability of 1-aminocyclopropane-1-carboxylate synthase (ACS) enzymes. May act as a substrate-specific adapter that connects ACS enzymes, such as ACS5, to ubiquitin ligase complexes, leading to proteasomal degradation of ACS enzymes. This Arabidopsis thaliana (Mouse-ear cress) protein is ETO1-like protein 2 (EOL2).